The chain runs to 475 residues: Transmembrane protein 181 (475 aa).

9 helical membrane-spanning segments follow: residues His16–Ile36, Glu131–Phe151, Leu175–Ala195, Ser214–Val234, Leu245–Ile265, Phe276–Ile296, Met320–Val340, Leu356–Leu376, and Phe401–Pro421. Residue Ser443 is modified to Phosphoserine.

The protein belongs to the TMEM181 family. As to quaternary structure, interacts with cytolethal distending toxin.

It localises to the membrane. Mediates action of cytolethal distending toxins (CDT), which are secreted by many pathogenic bacteria. Expression level of TMEM181 is rate-limiting for intoxication. This is Transmembrane protein 181 (TMEM181) from Homo sapiens (Human).